A 330-amino-acid chain; its full sequence is ADP-L-glycero-D-manno-heptose-6-epimerase (330 aa).

Residues 11-12 (FI), 32-33 (DN), lysine 39, lysine 54, 75-79 (EGACS), and asparagine 92 contribute to the NADP(+) site. Tyrosine 139 (proton acceptor) is an active-site residue. Position 143 (lysine 143) interacts with NADP(+). Asparagine 168 provides a ligand contact to substrate. NADP(+) is bound by residues valine 169 and lysine 177. Lysine 177 (proton acceptor) is an active-site residue. Substrate-binding positions include arginine 179, histidine 186, 200–203 (FGEY), arginine 213, and tyrosine 292.

This sequence belongs to the NAD(P)-dependent epimerase/dehydratase family. HldD subfamily. In terms of assembly, homopentamer. Requires NADP(+) as cofactor.

The enzyme catalyses ADP-D-glycero-beta-D-manno-heptose = ADP-L-glycero-beta-D-manno-heptose. The protein operates within nucleotide-sugar biosynthesis; ADP-L-glycero-beta-D-manno-heptose biosynthesis; ADP-L-glycero-beta-D-manno-heptose from D-glycero-beta-D-manno-heptose 7-phosphate: step 4/4. Its function is as follows. Catalyzes the interconversion between ADP-D-glycero-beta-D-manno-heptose and ADP-L-glycero-beta-D-manno-heptose via an epimerization at carbon 6 of the heptose. The polypeptide is ADP-L-glycero-D-manno-heptose-6-epimerase (Paraburkholderia xenovorans (strain LB400)).